Here is an 89-residue protein sequence, read N- to C-terminus: Calsenilin isoform 4 (89 aa).

Residues 27 to 57 (SSRDAEDQGSREGIGWQPPGRSWAHTTEQEG) are disordered.

In terms of tissue distribution, isoform 1 or isoform 4 (T+ forms) are expressed at equal levels with isoform 2 or isoform 3 (T- forms) in brain.

Unknown for isoform 4. Csen is involved in calcium-dependent transcriptional repression, regulation of potassium channels, and perhaps in processing of PSEN2 and apoptosis. This chain is Calsenilin isoform 4 (Kcnip3), found in Mus musculus (Mouse).